The sequence spans 365 residues: Class I histocompatibility antigen, Gogo-A*0401 alpha chain (365 aa).

The signal sequence occupies residues 1 to 24 (MAVMAPRTLVLLLSGALALTQTWA). The tract at residues 25-114 (GSHSMRYFYT…LRGYYNQSED (90 aa)) is alpha-1. Residues 25 to 308 (GSHSMRYFYT…EPSSQPTIPI (284 aa)) are Extracellular-facing. N-linked (GlcNAc...) asparagine glycosylation is present at asparagine 110. The alpha-2 stretch occupies residues 115–206 (GSHTIQRMYG…ENGKETLQLT (92 aa)). 2 disulfides stabilise this stretch: cysteine 125–cysteine 188 and cysteine 227–cysteine 283. An alpha-3 region spans residues 207-298 (DAPKTHMTHH…GLPKPLTLRW (92 aa)). Residues 209–295 (PKTHMTHHPV…QHEGLPKPLT (87 aa)) form the Ig-like C1-type domain. Positions 299–308 (EPSSQPTIPI) are connecting peptide. A helical membrane pass occupies residues 309 to 332 (VGIIAGLVLFGAVIAGAVVAAVRW). The Cytoplasmic portion of the chain corresponds to 333 to 365 (RRKSSDRKGGSYSQAASSDSAQGSDVSLTACKV). A disordered region spans residues 338-365 (DRKGGSYSQAASSDSAQGSDVSLTACKV). The span at 342 to 359 (GSYSQAASSDSAQGSDVS) shows a compositional bias: low complexity. Residue serine 343 is modified to Phosphoserine. A Phosphotyrosine modification is found at tyrosine 344. Residues serine 345, serine 349, serine 350, serine 352, serine 356, and serine 359 each carry the phosphoserine modification.

Belongs to the MHC class I family. Heterodimer of an alpha chain and a beta chain (beta-2-microglobulin).

It localises to the membrane. Involved in the presentation of foreign antigens to the immune system. This Gorilla gorilla gorilla (Western lowland gorilla) protein is Class I histocompatibility antigen, Gogo-A*0401 alpha chain.